The sequence spans 577 residues: Aspartate--tRNA(Asp/Asn) ligase (577 aa).

Glu171 serves as a coordination point for L-aspartate. The aspartate stretch occupies residues 195 to 198; that stretch reads QLFK. Position 217 (Arg217) interacts with L-aspartate. ATP contacts are provided by residues 217–219 and Gln226; that span reads RDE. Residue His444 participates in L-aspartate binding. Residue Glu474 participates in ATP binding. Arg481 provides a ligand contact to L-aspartate. Residue 526–529 participates in ATP binding; it reads GFDR.

This sequence belongs to the class-II aminoacyl-tRNA synthetase family. Type 1 subfamily. As to quaternary structure, homodimer.

It is found in the cytoplasm. The catalysed reaction is tRNA(Asx) + L-aspartate + ATP = L-aspartyl-tRNA(Asx) + AMP + diphosphate. Aspartyl-tRNA synthetase with relaxed tRNA specificity since it is able to aspartylate not only its cognate tRNA(Asp) but also tRNA(Asn). Reaction proceeds in two steps: L-aspartate is first activated by ATP to form Asp-AMP and then transferred to the acceptor end of tRNA(Asp/Asn). In Helicobacter pylori (strain P12), this protein is Aspartate--tRNA(Asp/Asn) ligase.